A 510-amino-acid polypeptide reads, in one-letter code: Bifunctional purine biosynthesis protein PurH (510 aa).

The 144-residue stretch at 1 to 144 folds into the MGS-like domain; sequence MSKRALISVT…KNYKDVIVVV (144 aa).

This sequence belongs to the PurH family.

It catalyses the reaction (6R)-10-formyltetrahydrofolate + 5-amino-1-(5-phospho-beta-D-ribosyl)imidazole-4-carboxamide = 5-formamido-1-(5-phospho-D-ribosyl)imidazole-4-carboxamide + (6S)-5,6,7,8-tetrahydrofolate. The catalysed reaction is IMP + H2O = 5-formamido-1-(5-phospho-D-ribosyl)imidazole-4-carboxamide. It participates in purine metabolism; IMP biosynthesis via de novo pathway; 5-formamido-1-(5-phospho-D-ribosyl)imidazole-4-carboxamide from 5-amino-1-(5-phospho-D-ribosyl)imidazole-4-carboxamide (10-formyl THF route): step 1/1. Its pathway is purine metabolism; IMP biosynthesis via de novo pathway; IMP from 5-formamido-1-(5-phospho-D-ribosyl)imidazole-4-carboxamide: step 1/1. In Clostridioides difficile (strain 630) (Peptoclostridium difficile), this protein is Bifunctional purine biosynthesis protein PurH.